Here is a 368-residue protein sequence, read N- to C-terminus: Phosphate acyltransferase (368 aa).

Belongs to the PlsX family. In terms of assembly, homodimer. Probably interacts with PlsY.

It is found in the cytoplasm. The enzyme catalyses a fatty acyl-[ACP] + phosphate = an acyl phosphate + holo-[ACP]. It functions in the pathway lipid metabolism; phospholipid metabolism. Functionally, catalyzes the reversible formation of acyl-phosphate (acyl-PO(4)) from acyl-[acyl-carrier-protein] (acyl-ACP). This enzyme utilizes acyl-ACP as fatty acyl donor, but not acyl-CoA. This Herpetosiphon aurantiacus (strain ATCC 23779 / DSM 785 / 114-95) protein is Phosphate acyltransferase.